Consider the following 368-residue polypeptide: Uroporphyrinogen decarboxylase (368 aa).

Residues 41–45, Asp91, Tyr168, Ser223, and His345 each bind substrate; that span reads RQAGR.

The protein belongs to the uroporphyrinogen decarboxylase family. As to quaternary structure, homodimer.

It is found in the cytoplasm. The enzyme catalyses uroporphyrinogen III + 4 H(+) = coproporphyrinogen III + 4 CO2. The protein operates within porphyrin-containing compound metabolism; protoporphyrin-IX biosynthesis; coproporphyrinogen-III from 5-aminolevulinate: step 4/4. Its function is as follows. Catalyzes the decarboxylation of four acetate groups of uroporphyrinogen-III to yield coproporphyrinogen-III. This is Uroporphyrinogen decarboxylase from Psychrobacter sp. (strain PRwf-1).